The primary structure comprises 349 residues: MASIDSLQFHSLCNLQSSIGRAKLQNPSSLVIFRRRPVNLNWVQFETKGSFVCKAIGDSSTPDEDIQNTQSDDNVVVVTATTQSDIPHDSEYSISRFRSMVTTLPPVVFLMKKCSVNSIWIGVCITATVLVAAIRAYVVRKSRDNQRAGSVADLVRRGQLRSGDRRGISKSLNYEDPFNNPFVKLDKGSSTVEMCGKVYRLAPVTLTEKEQTIHQKRRSRAYQWKRPTIFLKEGDSIPPDVDPDTVRWIPANHPFATTVSDIDQDLAQNNVYQKQGVPFRIRAEHEAMQKKLEALQNEEKLNNLSIDSQNARDFQRPYKFSAKLEGENIQKNSQENHTGNSSSEETHKS.

The transit peptide at Met-1–Val-52 directs the protein to the chloroplast. At Cys-53–Val-116 the chain is on the chloroplast intermembrane side. The chain crosses the membrane as a helical span at residues Asn-117–Val-139. The Stromal portion of the chain corresponds to Arg-140–Ser-349. The disordered stretch occupies residues Gln-315–Ser-349. A compositionally biased stretch (polar residues) spans Ile-329 to Ser-343.

Interacts with MIND1. Interacts with ARC6 in the chloroplast stroma and binds to FtsZ2-1 in an ARC6-dependent manner.

It localises to the plastid. The protein resides in the chloroplast inner membrane. Functionally, required for chloroplast division. Together with MIND1 and ARC3, regulates FtsZ ring positioning in chloroplasts in an ARC6-dependent manner. Determines the site of chloroplast division in concert with MIND1. Not directly involved in ring formation, but required for MIND1 and MINE1 localization to regulate FtsZ ring formation during plastidial constriction. This chain is Protein MULTIPLE CHLOROPLAST DIVISION SITE 1, found in Arabidopsis thaliana (Mouse-ear cress).